A 298-amino-acid chain; its full sequence is HTH-type transcriptional regulator ArgP (298 aa).

An HTH lysR-type domain is found at 4–60 (LDYRWIEALDSVVSKGSFERAAEQLFISQSAVSQRIKQLEKYLAQPVLIREQPPRPT). The segment at residues 21–40 (FERAAEQLFISQSAVSQRIK) is a DNA-binding region (H-T-H motif).

This sequence belongs to the LysR transcriptional regulatory family. As to quaternary structure, homodimer.

Controls the transcription of genes involved in arginine and lysine metabolism. This Vibrio cholerae serotype O1 (strain ATCC 39541 / Classical Ogawa 395 / O395) protein is HTH-type transcriptional regulator ArgP.